Consider the following 454-residue polypeptide: Elongation factor Tu, mitochondrial (454 aa).

Residues 1–51 (MASVVLRNPSSKRLVPFSSQIYSRCGASVTSSYSISHSIGGDDLSSSTFGT) constitute a mitochondrion transit peptide. In terms of domain architecture, tr-type G spans 65-261 (KPHVNVGTIG…AVDEYIPDPV (197 aa)). A G1 region spans residues 74–81 (GHVDHGKT). 74–81 (GHVDHGKT) contacts GTP. A Phosphothreonine modification is found at Thr82. A G2 region spans residues 115–119 (GITIA). Residues 136–139 (DCPG) are G3. GTP is bound by residues 136-140 (DCPGH) and 191-194 (NKVD). Residues 191–194 (NKVD) are G4. Residues 229-231 (SAL) are G5.

The protein belongs to the TRAFAC class translation factor GTPase superfamily. Classic translation factor GTPase family. EF-Tu/EF-1A subfamily.

It localises to the mitochondrion. Its function is as follows. This protein promotes the GTP-dependent binding of aminoacyl-tRNA to the A-site of ribosomes during protein biosynthesis. This is Elongation factor Tu, mitochondrial (TUFA) from Arabidopsis thaliana (Mouse-ear cress).